The primary structure comprises 765 residues: Cullin-5 (765 aa).

A Cullin neddylation domain is found at 696-757 (RELRVQEGIV…NKYMERRADD (62 aa)). K709 is covalently cross-linked (Glycyl lysine isopeptide (Lys-Gly) (interchain with G-Cter in NEDD8)).

This sequence belongs to the cullin family. In terms of assembly, interacts with rbx-1 and rbx-2. Neddylated; which enhances the ubiquitination activity of SCF-like complex.

It participates in protein modification; protein ubiquitination. Functionally, probable core component of cullin-based SCF-like E3 ubiquitin-protein ligase complexes which mediate the ubiquitination and subsequent proteasomal degradation of target proteins. In association with rbx-2 seems to be involved in meiotic cell cycle progression in the germline. Required for phosphorylation of the MAP kinase MPK-1 in the germline. This chain is Cullin-5 (cul-5), found in Caenorhabditis elegans.